Reading from the N-terminus, the 312-residue chain is Pyridoxal kinase (312 aa).

N-acetylmethionine is present on Met-1. Residues Ser-12 and Thr-47 each coordinate pyridoxal. A pyridoxal 5'-phosphate-binding site is contributed by Thr-47. Residue Ser-59 is modified to Phosphoserine. Asp-113 contributes to the ATP binding site. Asp-113 lines the Na(+) pocket. Mg(2+) is bound at residue Asp-118. Position 148 (Thr-148) interacts with Na(+). Residue 150–153 coordinates ATP; it reads NQFE. At Ser-164 the chain carries Phosphoserine. Thr-186 is a Na(+) binding site. 186-187 contributes to the ATP binding site; the sequence is TS. Ser-213 carries the post-translational modification Phosphoserine. Residues 226-228 and Thr-233 each bind ATP; that span reads VDP. 234–235 contributes to the pyridoxal 5'-phosphate binding site; it reads GD. The active-site Proton acceptor is the Asp-235. Ser-285 carries the phosphoserine modification.

Belongs to the pyridoxine kinase family. As to quaternary structure, homodimer. It depends on Zn(2+) as a cofactor. The cofactor is Mg(2+).

The protein resides in the cytoplasm. It localises to the cytosol. The catalysed reaction is pyridoxal + ATP = pyridoxal 5'-phosphate + ADP + H(+). It catalyses the reaction pyridoxamine + ATP = pyridoxamine 5'-phosphate + ADP + H(+). The enzyme catalyses pyridoxine + ATP = pyridoxine 5'-phosphate + ADP + H(+). It functions in the pathway cofactor metabolism; pyridoxal 5'-phosphate salvage; pyridoxal 5'-phosphate from pyridoxal: step 1/1. The protein operates within cofactor metabolism; pyridoxal 5'-phosphate salvage; pyridoxine 5'-phosphate from pyridoxine: step 1/1. Its pathway is cofactor metabolism; pyridoxal 5'-phosphate salvage; pyridoxamine 5'-phosphate from pyridoxamine: step 1/1. Its activity is regulated as follows. Activity is increased in the presence of K(+)or Na(+). Its function is as follows. Catalyzes the phosphorylation of the dietary vitamin B6 vitamers pyridoxal (PL), pyridoxine (PN) and pyridoxamine (PM) to form pyridoxal 5'-phosphate (PLP), pyridoxine 5'-phosphate (PNP) and pyridoxamine 5'-phosphate (PMP), respectively. PLP is the active form of vitamin B6, and acts as a cofactor for over 140 different enzymatic reactions. The protein is Pyridoxal kinase (Pdxk) of Rattus norvegicus (Rat).